The following is a 690-amino-acid chain: Eukaryotic translation initiation factor 3 subunit B (690 aa).

The span at 1–11 shows a compositional bias: basic and acidic residues; sequence MAKKKSEEHSG. Positions 1–33 are disordered; the sequence is MAKKKSEEHSGADANDSDYNEEPNFDDPPGYVD. Residues 15-25 show a composition bias toward acidic residues; that stretch reads NDSDYNEEPNF. The 85-residue stretch at 57 to 141 folds into the RRM domain; it reads SVVVVDNMPK…YTFAVNLFTD (85 aa). WD repeat units lie at residues 207 to 246, 292 to 331, 334 to 369, 442 to 484, and 530 to 575; these read TRERFTDTFVKWSPLGTYVVTFHKPGVAIWGGSSFQKIQK, GDGMSVLSMFRWSHDDKFVARMGENSIHIYETPSFYLLDL, IKIAGIRGFSWSPTDNVIAYWVEEQNQIPARVTLME, EIRE…KPSL, and PDHF…IRRT. A coiled-coil region spans residues 613–646; sequence EQKDRLRLTRASKELLEKRAQLRETFMEYRNKRI.

The protein belongs to the eIF-3 subunit B family. Component of the eukaryotic translation initiation factor 3 (eIF-3) complex. The eIF-3 complex interacts with pix. Interacts with mxt.

It is found in the cytoplasm. Its function is as follows. RNA-binding component of the eukaryotic translation initiation factor 3 (eIF-3) complex, which is involved in protein synthesis of a specialized repertoire of mRNAs and, together with other initiation factors, stimulates binding of mRNA and methionyl-tRNAi to the 40S ribosome. The eIF-3 complex specifically targets and initiates translation of a subset of mRNAs involved in cell proliferation. In Drosophila mojavensis (Fruit fly), this protein is Eukaryotic translation initiation factor 3 subunit B.